Consider the following 159-residue polypeptide: NADH-quinone oxidoreductase subunit I (159 aa).

4Fe-4S ferredoxin-type domains follow at residues 51-80 and 90-119; these read RRYE…IEAD and TRYD…EGPN. Residues C60, C63, C66, C70, C99, C102, C105, and C109 each coordinate [4Fe-4S] cluster.

It belongs to the complex I 23 kDa subunit family. As to quaternary structure, NDH-1 is composed of 14 different subunits. Subunits NuoA, H, J, K, L, M, N constitute the membrane sector of the complex. The cofactor is [4Fe-4S] cluster.

The protein localises to the cell inner membrane. The enzyme catalyses a quinone + NADH + 5 H(+)(in) = a quinol + NAD(+) + 4 H(+)(out). In terms of biological role, NDH-1 shuttles electrons from NADH, via FMN and iron-sulfur (Fe-S) centers, to quinones in the respiratory chain. The immediate electron acceptor for the enzyme in this species is believed to be ubiquinone. Couples the redox reaction to proton translocation (for every two electrons transferred, four hydrogen ions are translocated across the cytoplasmic membrane), and thus conserves the redox energy in a proton gradient. The sequence is that of NADH-quinone oxidoreductase subunit I from Rickettsia conorii (strain ATCC VR-613 / Malish 7).